Consider the following 446-residue polypeptide: ATP-dependent protease ATPase subunit HslU (446 aa).

Residues Val-18, 60–65 (GVGKTE), Asp-259, Glu-324, and Arg-396 each bind ATP.

Belongs to the ClpX chaperone family. HslU subfamily. As to quaternary structure, a double ring-shaped homohexamer of HslV is capped on each side by a ring-shaped HslU homohexamer. The assembly of the HslU/HslV complex is dependent on binding of ATP.

It localises to the cytoplasm. Its function is as follows. ATPase subunit of a proteasome-like degradation complex; this subunit has chaperone activity. The binding of ATP and its subsequent hydrolysis by HslU are essential for unfolding of protein substrates subsequently hydrolyzed by HslV. HslU recognizes the N-terminal part of its protein substrates and unfolds these before they are guided to HslV for hydrolysis. The protein is ATP-dependent protease ATPase subunit HslU of Acidovorax ebreus (strain TPSY) (Diaphorobacter sp. (strain TPSY)).